The sequence spans 181 residues: uncharacterized protein (181 aa).

In terms of domain architecture, N-acetyltransferase spans 1–159; that stretch reads MTVHHFTFHI…KACWMMQSLT (159 aa).

This sequence belongs to the acetyltransferase family.

This is an uncharacterized protein from Escherichia coli (strain K12).